The following is a 145-amino-acid chain: Class I hydrophobin 1 (145 aa).

The signal sequence occupies residues 1-18 (MYASVIIYTLVALCGVMS). 4 disulfides stabilise this stretch: C88–C118, C95–C112, C96–C106, and C119–C128. The N-linked (GlcNAc...) asparagine glycan is linked to N108.

The protein belongs to the fungal hydrophobin family. As to quaternary structure, self-assembles to form functional amyloid fibrils called rodlets. Self-assembly into fibrillar rodlets occurs spontaneously at hydrophobic:hydrophilic interfaces and the rodlets further associate laterally to form amphipathic monolayers.

It localises to the secreted. It is found in the cell wall. Functionally, aerial growth, conidiation, and dispersal of filamentous fungi in the environment rely upon a capability of their secreting small amphipathic proteins called hydrophobins (HPBs) with low sequence identity. Class I can self-assemble into an outermost layer of rodlet bundles on aerial cell surfaces, conferring cellular hydrophobicity that supports fungal growth, development and dispersal; whereas Class II form highly ordered films at water-air interfaces through intermolecular interactions but contribute nothing to the rodlet structure. Hyd1 is a class I hydrophobin that is involved in plant root attachment and colonization, and that might also protect the growing hyphae from locally synthesized plant defense compounds during the first stages of cucumber interaction, allowing this opportunistic, non-pathogenic fungus to colonize the intercellular spaces of the plant root. The protein is Class I hydrophobin 1 of Trichoderma asperellum (Filamentous fungus).